Here is a 251-residue protein sequence, read N- to C-terminus: L-ascorbate peroxidase 2, cytosolic (251 aa).

The active-site Proton acceptor is His-43. His-163 is a binding site for heme b. Thr-164, Thr-180, Asn-182, Ile-185, and Asp-187 together coordinate K(+).

Belongs to the peroxidase family. Ascorbate peroxidase subfamily. Requires heme b as cofactor. As to expression, detected in bundle sheath cells, the photosynthetic cells that surround the phloem and xylem.

Its subcellular location is the cytoplasm. It carries out the reaction L-ascorbate + H2O2 = L-dehydroascorbate + 2 H2O. Functionally, plays a key role in hydrogen peroxide removal. The protein is L-ascorbate peroxidase 2, cytosolic of Arabidopsis thaliana (Mouse-ear cress).